The primary structure comprises 356 residues: Probable arabinogalactan endo-beta-1,4-galactanase A (356 aa).

Positions 1–21 (MLGKTVLLPLLVLLCHSLASA) are cleaved as a signal peptide. Asn133 carries N-linked (GlcNAc...) asparagine glycosylation. Glu157 functions as the Proton donor in the catalytic mechanism. Glu268 functions as the Nucleophile in the catalytic mechanism.

The protein belongs to the glycosyl hydrolase 53 family.

The protein localises to the secreted. It carries out the reaction The enzyme specifically hydrolyzes (1-&gt;4)-beta-D-galactosidic linkages in type I arabinogalactans.. Its function is as follows. Endogalactanase involved in the degradation of plant cell wall polysaccharides, and more particularly of hairy regions of pectin. The protein is Probable arabinogalactan endo-beta-1,4-galactanase A (galA) of Aspergillus fumigatus (strain CBS 144.89 / FGSC A1163 / CEA10) (Neosartorya fumigata).